Reading from the N-terminus, the 333-residue chain is Holliday junction branch migration complex subunit RuvB (333 aa).

The interval 1–182 (MDERLLSGES…FGVLSRLEYY (182 aa)) is large ATPase domain (RuvB-L). ATP contacts are provided by residues Leu21, Arg22, Gly63, Lys66, Thr67, Thr68, 129-131 (EDF), Arg172, Tyr182, and Arg219. Thr67 is a binding site for Mg(2+). A small ATPAse domain (RuvB-S) region spans residues 183–253 (TVDQLSAIVE…ITQMALELLQ (71 aa)). Residues 256 to 333 (KLGLDHIDHK…EHFGMEMPKV (78 aa)) form a head domain (RuvB-H) region. DNA is bound by residues Arg311 and Arg316.

It belongs to the RuvB family. Homohexamer. Forms an RuvA(8)-RuvB(12)-Holliday junction (HJ) complex. HJ DNA is sandwiched between 2 RuvA tetramers; dsDNA enters through RuvA and exits via RuvB. An RuvB hexamer assembles on each DNA strand where it exits the tetramer. Each RuvB hexamer is contacted by two RuvA subunits (via domain III) on 2 adjacent RuvB subunits; this complex drives branch migration. In the full resolvosome a probable DNA-RuvA(4)-RuvB(12)-RuvC(2) complex forms which resolves the HJ.

Its subcellular location is the cytoplasm. It carries out the reaction ATP + H2O = ADP + phosphate + H(+). The RuvA-RuvB-RuvC complex processes Holliday junction (HJ) DNA during genetic recombination and DNA repair, while the RuvA-RuvB complex plays an important role in the rescue of blocked DNA replication forks via replication fork reversal (RFR). RuvA specifically binds to HJ cruciform DNA, conferring on it an open structure. The RuvB hexamer acts as an ATP-dependent pump, pulling dsDNA into and through the RuvAB complex. RuvB forms 2 homohexamers on either side of HJ DNA bound by 1 or 2 RuvA tetramers; 4 subunits per hexamer contact DNA at a time. Coordinated motions by a converter formed by DNA-disengaged RuvB subunits stimulates ATP hydrolysis and nucleotide exchange. Immobilization of the converter enables RuvB to convert the ATP-contained energy into a lever motion, pulling 2 nucleotides of DNA out of the RuvA tetramer per ATP hydrolyzed, thus driving DNA branch migration. The RuvB motors rotate together with the DNA substrate, which together with the progressing nucleotide cycle form the mechanistic basis for DNA recombination by continuous HJ branch migration. Branch migration allows RuvC to scan DNA until it finds its consensus sequence, where it cleaves and resolves cruciform DNA. This is Holliday junction branch migration complex subunit RuvB from Bacillus mycoides (strain KBAB4) (Bacillus weihenstephanensis).